The sequence spans 397 residues: UPF0261 protein mlr3387 (397 aa).

This sequence belongs to the UPF0261 family.

The polypeptide is UPF0261 protein mlr3387 (Mesorhizobium japonicum (strain LMG 29417 / CECT 9101 / MAFF 303099) (Mesorhizobium loti (strain MAFF 303099))).